Consider the following 228-residue polypeptide: NOI-like protein (228 aa).

Residues 56 to 75 (AQDHQHSEKHHNDTSTDYHV) are compositionally biased toward basic and acidic residues. Disordered regions lie at residues 56 to 87 (AQDHQHSEKHHNDTSTDYHVVKQHRRKHHRRE) and 99 to 133 (RPHRSPFQGVDMDSHRSRNHGTSATMSSSVKRNSD). The span at 76 to 86 (VKQHRRKHHRR) shows a compositional bias: basic residues. A compositionally biased stretch (polar residues) spans 118–133 (HGTSATMSSSVKRNSD).

This sequence belongs to the RIN4 family.

This is NOI-like protein from Elaeis oleifera (American oil palm).